We begin with the raw amino-acid sequence, 189 residues long: Potassium-transporting ATPase KdpC subunit (189 aa).

Residues 6-26 (PAIMMVLVFTIICGGIYPAVV) form a helical membrane-spanning segment.

Belongs to the KdpC family. In terms of assembly, the system is composed of three essential subunits: KdpA, KdpB and KdpC.

It localises to the cell inner membrane. Part of the high-affinity ATP-driven potassium transport (or Kdp) system, which catalyzes the hydrolysis of ATP coupled with the electrogenic transport of potassium into the cytoplasm. This subunit acts as a catalytic chaperone that increases the ATP-binding affinity of the ATP-hydrolyzing subunit KdpB by the formation of a transient KdpB/KdpC/ATP ternary complex. The sequence is that of Potassium-transporting ATPase KdpC subunit from Geobacter metallireducens (strain ATCC 53774 / DSM 7210 / GS-15).